The chain runs to 350 residues: Ribonuclease H2 subunit B (350 aa).

Positions 134 to 151 (QDYSNSSDTGENQKSNSK) are enriched in polar residues. Positions 134–153 (QDYSNSSDTGENQKSNSKTN) are disordered.

It belongs to the RNase H2 subunit B family. Highly divergent. In terms of assembly, the RNase 2 complex is a heterotrimer composed of the catalytic subunit RNH201 and of the non-catalytic subunits RNH202 and RNH203.

The protein localises to the nucleus. Its function is as follows. Non catalytic subunit of RNase H2, an endonuclease that specifically degrades the RNA of RNA:DNA hybrids. Participates in DNA replication, possibly by mediating the removal of lagging-strand Okazaki fragment RNA primers during DNA replication. Mediates the excision of single ribonucleotides from DNA:RNA duplexes. The sequence is that of Ribonuclease H2 subunit B (RNH202) from Saccharomyces cerevisiae (strain ATCC 204508 / S288c) (Baker's yeast).